The following is a 126-amino-acid chain: Large ribosomal subunit protein bL19 (126 aa).

This sequence belongs to the bacterial ribosomal protein bL19 family.

Functionally, this protein is located at the 30S-50S ribosomal subunit interface and may play a role in the structure and function of the aminoacyl-tRNA binding site. The sequence is that of Large ribosomal subunit protein bL19 from Bordetella bronchiseptica (strain ATCC BAA-588 / NCTC 13252 / RB50) (Alcaligenes bronchisepticus).